A 238-amino-acid polypeptide reads, in one-letter code: ATP synthase subunit a (238 aa).

A run of 4 helical transmembrane segments spans residues 17 to 37 (LSNI…AIIC), 80 to 100 (ITLL…QIAI), 112 to 132 (DPIV…YYGI), and 194 to 214 (IFVG…SIFI).

Belongs to the ATPase A chain family. As to quaternary structure, F-type ATPases have 2 components, CF(1) - the catalytic core - and CF(0) - the membrane proton channel. CF(1) has five subunits: alpha(3), beta(3), gamma(1), delta(1), epsilon(1). CF(0) has three main subunits: a(1), b(2) and c(9-12). The alpha and beta chains form an alternating ring which encloses part of the gamma chain. CF(1) is attached to CF(0) by a central stalk formed by the gamma and epsilon chains, while a peripheral stalk is formed by the delta and b chains.

It is found in the cell membrane. Functionally, key component of the proton channel; it plays a direct role in the translocation of protons across the membrane. The protein is ATP synthase subunit a of Listeria innocua serovar 6a (strain ATCC BAA-680 / CLIP 11262).